The primary structure comprises 358 residues: S-adenosylmethionine:tRNA ribosyltransferase-isomerase (358 aa).

It belongs to the QueA family. As to quaternary structure, monomer.

It is found in the cytoplasm. It carries out the reaction 7-aminomethyl-7-carbaguanosine(34) in tRNA + S-adenosyl-L-methionine = epoxyqueuosine(34) in tRNA + adenine + L-methionine + 2 H(+). Its pathway is tRNA modification; tRNA-queuosine biosynthesis. Transfers and isomerizes the ribose moiety from AdoMet to the 7-aminomethyl group of 7-deazaguanine (preQ1-tRNA) to give epoxyqueuosine (oQ-tRNA). The polypeptide is S-adenosylmethionine:tRNA ribosyltransferase-isomerase (Rhodopseudomonas palustris (strain BisA53)).